A 371-amino-acid polypeptide reads, in one-letter code: Phosphate acyltransferase (371 aa).

This sequence belongs to the PlsX family. Homodimer. Probably interacts with PlsY.

The protein localises to the cytoplasm. The enzyme catalyses a fatty acyl-[ACP] + phosphate = an acyl phosphate + holo-[ACP]. It functions in the pathway lipid metabolism; phospholipid metabolism. Functionally, catalyzes the reversible formation of acyl-phosphate (acyl-PO(4)) from acyl-[acyl-carrier-protein] (acyl-ACP). This enzyme utilizes acyl-ACP as fatty acyl donor, but not acyl-CoA. This Polaromonas sp. (strain JS666 / ATCC BAA-500) protein is Phosphate acyltransferase.